A 206-amino-acid polypeptide reads, in one-letter code: Small ribosomal subunit protein uS4 (206 aa).

The S4 RNA-binding domain occupies 96–156; that stretch reads GRLDNVVYRM…EKAKKQARIK (61 aa).

This sequence belongs to the universal ribosomal protein uS4 family. Part of the 30S ribosomal subunit. Contacts protein S5. The interaction surface between S4 and S5 is involved in control of translational fidelity.

One of the primary rRNA binding proteins, it binds directly to 16S rRNA where it nucleates assembly of the body of the 30S subunit. Its function is as follows. With S5 and S12 plays an important role in translational accuracy. The protein is Small ribosomal subunit protein uS4 of Aeromonas hydrophila subsp. hydrophila (strain ATCC 7966 / DSM 30187 / BCRC 13018 / CCUG 14551 / JCM 1027 / KCTC 2358 / NCIMB 9240 / NCTC 8049).